The chain runs to 518 residues: Putative BTB/POZ domain and WD-repeat protein R731 (518 aa).

The 71-residue stretch at 22 to 92 (TDCQLHLTDS…FYGFPLEEPN (71 aa)) folds into the BTB domain. The interval 224–246 (NHEESSDDEVNDDEDTDNEDTDD) is disordered. Residues 228-246 (SSDDEVNDDEDTDNEDTDD) are compositionally biased toward acidic residues. 2 WD repeats span residues 391 to 430 (NHST…SLIK) and 437 to 475 (FLKF…IIQN).

Belongs to the mimivirus BTB/WD family.

The polypeptide is Putative BTB/POZ domain and WD-repeat protein R731 (Acanthamoeba polyphaga (Amoeba)).